Reading from the N-terminus, the 346-residue chain is Very-long-chain 3-oxoacyl-CoA reductase (346 aa).

The helical transmembrane segment at 26–46 (GASALLAAGSLFVVSRALVFV) threads the bilayer. NADP(+) is bound by residues V71, D126, D134, N153, Y220, K224, I253, and S255. Catalysis depends on Y220, which acts as the Proton donor. The Lowers pKa of active site Tyr role is filled by K224.

This sequence belongs to the short-chain dehydrogenases/reductases (SDR) family.

Its subcellular location is the endoplasmic reticulum membrane. The enzyme catalyses a very-long-chain (3R)-3-hydroxyacyl-CoA + NADP(+) = a very-long-chain 3-oxoacyl-CoA + NADPH + H(+). The protein operates within lipid metabolism; fatty acid biosynthesis. Functionally, component of the microsomal membrane bound fatty acid elongation system, which produces the 26-carbon very long-chain fatty acids (VLCFA) from palmitate. Catalyzes the reduction of the 3-ketoacyl-CoA intermediate that is formed in each cycle of fatty acid elongation. VLCFAs serve as precursors for ceramide and sphingolipids. In Aspergillus niger (strain ATCC MYA-4892 / CBS 513.88 / FGSC A1513), this protein is Very-long-chain 3-oxoacyl-CoA reductase.